Consider the following 883-residue polypeptide: Protein argonaute 16 (883 aa).

Residues P254–S366 enclose the PAZ domain. The Piwi domain occupies F535–K844.

The protein belongs to the argonaute family. Ago subfamily.

In terms of biological role, probably involved in the RNA silencing pathway. May bind to short RNAs such as microRNAs (miRNAs) or short interfering RNAs (siRNAs), and represses the translation of mRNAs which are complementary to them. In Oryza sativa subsp. japonica (Rice), this protein is Protein argonaute 16 (AGO16).